We begin with the raw amino-acid sequence, 33 residues long: LGPDIVSPPVCGNELLEVGEECDCGTPENCQNE.

A Disintegrin domain is found at 8–33 (PPVCGNELLEVGEECDCGTPENCQNE). Residues V10, N13, L15, E17, E20, and D23 each coordinate Ca(2+). 2 cysteine pairs are disulfide-bonded: C11–C30 and C24–C30.

Belongs to the venom metalloproteinase (M12B) family. P-III subfamily. P-IIIb sub-subfamily. In terms of assembly, monomer. Zn(2+) serves as cofactor. In terms of processing, the N-terminus (from the N-terminal region of the metalloproteinase domain) is blocked. Expressed by the venom gland.

Its subcellular location is the secreted. With respect to regulation, the fibrinogenolytic and coagulant activities of the moojenin were abolished by preincubation with EDTA, 1,10-phenanthroline and beta-mercaptoethanol. Metalloproteinase moojenin: snake venom metalloproteinase that cleaves both alpha- and beta-chains of fibrinogen, but not the gamma-chain. Shows a coagulant activity on bovine plasma about 3.1 fold lower than crude venom. Renders the blood incoagulable when intraperitoneally administered into mice. Induces necrosis in liver and muscle, but does not cause histological alterations in mouse lungs, kidney or heart. In Bothrops moojeni (Lance-headed viper), this protein is Zinc metalloproteinase-disintegrin-like moojenin.